A 459-amino-acid polypeptide reads, in one-letter code: 23S rRNA (uracil-C(5))-methyltransferase RlmCD (459 aa).

The 59-residue stretch at 6–64 folds into the TRAM domain; sequence PVEKNEYYDVTFEDLTHEGAGVAKVQGFPIFVPNALPEEKAQIKVTRVKKGFAFGRLIE. 4 residues coordinate [4Fe-4S] cluster: C77, C83, C86, and C166. Residues Q290, Y319, E340, and D388 each coordinate S-adenosyl-L-methionine. C415 (nucleophile) is an active-site residue.

The protein belongs to the class I-like SAM-binding methyltransferase superfamily. RNA M5U methyltransferase family.

The catalysed reaction is uridine(747) in 23S rRNA + S-adenosyl-L-methionine = 5-methyluridine(747) in 23S rRNA + S-adenosyl-L-homocysteine + H(+). It catalyses the reaction uridine(1939) in 23S rRNA + S-adenosyl-L-methionine = 5-methyluridine(1939) in 23S rRNA + S-adenosyl-L-homocysteine + H(+). In terms of biological role, catalyzes the formation of 5-methyl-uridine at positions 747 (m5U747) and 1939 (m5U1939) in 23S rRNA. This chain is 23S rRNA (uracil-C(5))-methyltransferase RlmCD (rlmCD), found in Bacillus subtilis (strain 168).